Here is a 94-residue protein sequence, read N- to C-terminus: MTLGGLKPEVHAANDEIRQVVAKVADELKSKLNTTEVEPVSYKTQLVAGTNYFIKVKTPAGFAHARVYKDLQQNHSVHSVKADGITEESEIVYF.

The short motif at 45–49 (QLVAG) is the Secondary area of contact element.

It belongs to the cystatin family.

The protein resides in the cytoplasm. Its function is as follows. Intracellular thiol proteinase inhibitor. Inhibits papain, but not cathepsin B. This chain is Cystatin-A1 (cpiA), found in Dictyostelium discoideum (Social amoeba).